The following is a 603-amino-acid chain: ATP-dependent lipid A-core flippase (603 aa).

The next 4 helical transmembrane spans lie at 20 to 40, 79 to 99, 170 to 190, and 269 to 289; these read LGYVKPYIGMFLLSIVGFLIF, LVYAVPLLIILIAAWQGLGSF, VFLFLYLLWMNWKLTLVMLAI, and PMLQLVIYVAMAILMFLVLWL. The ABC transmembrane type-1 domain occupies 31 to 324; it reads LLSIVGFLIF…LSEVSSTVQR (294 aa). The region spanning 356–592 is the ABC transporter domain; sequence LEVRNLSFRY…NGHYARLHAM (237 aa). Position 390–397 (390–397) interacts with ATP; the sequence is GRSGSGKS.

The protein belongs to the ABC transporter superfamily. Lipid exporter (TC 3.A.1.106) family. In terms of assembly, homodimer.

The protein resides in the cell inner membrane. The enzyme catalyses ATP + H2O + lipid A-core oligosaccharideSide 1 = ADP + phosphate + lipid A-core oligosaccharideSide 2.. Functionally, involved in lipopolysaccharide (LPS) biosynthesis. Translocates lipid A-core from the inner to the outer leaflet of the inner membrane. Transmembrane domains (TMD) form a pore in the inner membrane and the ATP-binding domain (NBD) is responsible for energy generation. The polypeptide is ATP-dependent lipid A-core flippase (Pseudomonas aeruginosa (strain ATCC 15692 / DSM 22644 / CIP 104116 / JCM 14847 / LMG 12228 / 1C / PRS 101 / PAO1)).